Consider the following 124-residue polypeptide: Ubiquitin-related modifier 1 (124 aa).

The disordered stretch occupies residues 34-53 (IPSLVPKDNTTSAKNPPPKD). Position 124 is a 1-thioglycine (glycine 124). A Glycyl lysine isopeptide (Gly-Lys) (interchain with K-? in acceptor proteins) cross-link involves residue glycine 124.

It belongs to the URM1 family. Post-translationally, C-terminal thiocarboxylation occurs in 2 steps, it is first acyl-adenylated (-COAMP) via the hesA/moeB/thiF part of UBA4, then thiocarboxylated (-COSH) via the rhodanese domain of UBA4.

The protein localises to the cytoplasm. It functions in the pathway tRNA modification; 5-methoxycarbonylmethyl-2-thiouridine-tRNA biosynthesis. Its function is as follows. Acts as a sulfur carrier required for 2-thiolation of mcm(5)S(2)U at tRNA wobble positions of cytosolic tRNA(Lys), tRNA(Glu) and tRNA(Gln). Serves as sulfur donor in tRNA 2-thiolation reaction by being thiocarboxylated (-COSH) at its C-terminus by the MOCS3 homolog UBA4. The sulfur is then transferred to tRNA to form 2-thiolation of mcm(5)S(2)U. Prior mcm(5) tRNA modification by the elongator complex is required for 2-thiolation. Also acts as a ubiquitin-like protein (UBL) that is covalently conjugated via an isopeptide bond to lysine residues of target proteins such as AHP1. The thiocarboxylated form serves as substrate for conjugation and oxidative stress specifically induces the formation of UBL-protein conjugates. The chain is Ubiquitin-related modifier 1 from Coprinopsis cinerea (strain Okayama-7 / 130 / ATCC MYA-4618 / FGSC 9003) (Inky cap fungus).